Reading from the N-terminus, the 377-residue chain is Gibberellin 20 oxidase 1 (377 aa).

The Fe2OG dioxygenase domain occupies 222–322 (ENDSIMRLNY…RKSLAFFLCP (101 aa)). Fe cation contacts are provided by His247, Asp249, and His303. Residue Arg313 is part of the active site.

Belongs to the iron/ascorbate-dependent oxidoreductase family. GA20OX subfamily. Fe(2+) is required as a cofactor. L-ascorbate serves as cofactor. Highly expressed in stems and inflorescence tissues. Detected in seeds, roots, leaves and siliques.

It catalyses the reaction gibberellin A12 + 2 2-oxoglutarate + 3 O2 + H(+) = gibberellin A9 + 2 succinate + 3 CO2 + 2 H2O. It carries out the reaction gibberellin A12 + 2-oxoglutarate + O2 = gibberellin A15 + succinate + CO2. The enzyme catalyses gibberellin A15 + 2-oxoglutarate + O2 = gibberellin A24 + succinate + CO2 + H2O. The catalysed reaction is gibberellin A53 + 2-oxoglutarate + O2 = gibberellin A44 + succinate + CO2. It participates in plant hormone biosynthesis; gibberellin biosynthesis. Key oxidase enzyme in the biosynthesis of gibberellin that catalyzes the conversion of GA12 to GA9, via a three-step oxidation at C-20 of the GA skeleton. GA53 is less effectively oxidized than GA12 and is only oxidized one step to GA44. Involved in the promotion of the floral transition, fertility and silique elongation, but plays only a minor role in elongation of seedling organs. Acts redundantly with GA20OX2. The sequence is that of Gibberellin 20 oxidase 1 (GA20OX1) from Arabidopsis thaliana (Mouse-ear cress).